Here is a 686-residue protein sequence, read N- to C-terminus: Kinesin light chain (686 aa).

Disordered stretches follow at residues M1–Q23 and K158–A204. Residues S20 to D160 are a coiled coil. TPR repeat units lie at residues L215 to T248, A257 to T290, A299 to V332, A341 to K374, A383 to R416, and T472 to A505. Disordered regions lie at residues Q520–T558 and G586–F686. Residues D675 to F686 show a composition bias toward polar residues.

The protein belongs to the kinesin light chain family. Oligomeric complex composed of two heavy chains and two light chains. In terms of processing, phosphorylation may modulate the process of mechanochemical coupling.

Its subcellular location is the cytoplasm. The protein resides in the cytoskeleton. Kinesin is a microtubule-associated force-producing protein that may play a role in organelle transport. The light chain may function in coupling of cargo to the heavy chain or in the modulation of its ATPase activity. The protein is Kinesin light chain of Strongylocentrotus purpuratus (Purple sea urchin).